Here is a 429-residue protein sequence, read N- to C-terminus: High mobility group nucleosome-binding domain-containing protein 5 (429 aa).

The segment at 1 to 429 (MPKRKAAGDA…GEKGEPVSTV (429 aa)) is disordered. At threonine 29 the chain carries Phosphothreonine. Over residues 35 to 44 (KRASTSRKTK) the composition is skewed to basic residues. Residue lysine 64 forms a Glycyl lysine isopeptide (Lys-Gly) (interchain with G-Cter in SUMO2) linkage. Serine 90 is modified (phosphoserine). 2 stretches are compositionally biased toward basic and acidic residues: residues 92–101 (METEEVKEQI) and 109–124 (GGEKKEAVVTKGKNDE). A Glycyl lysine isopeptide (Lys-Gly) (interchain with G-Cter in SUMO1); alternate cross-link involves residue lysine 98. Residue lysine 98 forms a Glycyl lysine isopeptide (Lys-Gly) (interchain with G-Cter in SUMO2); alternate linkage. A Glycyl lysine isopeptide (Lys-Gly) (interchain with G-Cter in SUMO2) cross-link involves residue lysine 121. Positions 133-152 (EKDEDEKEHEDTGEEGEDGE) are enriched in acidic residues. Positions 153–195 (REGGLKEKPDVAEIEDAKEAKDDEEKEDKEKEDDKGGDGKKEE) are enriched in basic and acidic residues. Residues 196-209 (EKDDEGEAETEEEV) show a composition bias toward acidic residues. 2 stretches are compositionally biased toward basic and acidic residues: residues 210 to 387 (KEQQ…NEDR) and 413 to 429 (NKDFKEDGEKGEPVSTV).

Belongs to the HMGN family. In terms of tissue distribution, expressed in trophoblast giant cells.

The protein localises to the nucleus. Its function is as follows. Preferentially binds to euchromatin and modulates cellular transcription by counteracting linker histone-mediated chromatin compaction. The chain is High mobility group nucleosome-binding domain-containing protein 5 from Rattus norvegicus (Rat).